The sequence spans 219 residues: Transmembrane emp24 domain-containing protein 10 (219 aa).

An N-terminal signal peptide occupies residues 1–31; it reads MSGLSGPLSWPGPLLSALLFLFLLGPSSVLG. The required for interaction with STX17 stretch occupies residues 1 to 142; that stretch reads MSGLSGPLSW…KNYEEIAKVE (142 aa). Over 32 to 185 the chain is Lumenal; sequence ISFHLPVNSR…RDTNESTNTR (154 aa). The GOLD domain occupies 41-193; the sequence is RKCLREEIHK…TRVLYFSIFS (153 aa). A required for TMED10 and TMED2 cis-Golgi network localization region spans residues 147-178; that stretch reads LEVELRRLEDLSESIVNDFAYMKKREEEMRDT. Dimethylated arginine is present on residues Arg-171 and Arg-176. Asn-179 is a glycosylation site (N-linked (GlcNAc...) asparagine). The chain crosses the membrane as a helical span at residues 186–206; that stretch reads VLYFSIFSMFCLIGLATWQVF. The segment at 204–219 is interaction with COPG1; the sequence is QVFYLRRFFKAKKLIE. Topologically, residues 207–219 are cytoplasmic; that stretch reads YLRRFFKAKKLIE. The tract at residues 207-219 is interaction with ARF1 and IL1B; it reads YLRRFFKAKKLIE. A COPII vesicle coat-binding motif is present at residues 211–212; it reads FF. The COPI vesicle coat-binding motif lies at 211–219; that stretch reads FFKAKKLIE.

Belongs to the EMP24/GP25L family. As to quaternary structure, predominantly dimeric and to a lesser extent monomeric in the ER. Monomer and dimer in ERGIC and cis-Golgi network. Forms homooligomer (via GOLD domain); the assembly is promoted by direct binding with leaderless cargos and may form a protein channel that facilitates cargo entry into the ERGIC. Forms heterooligomeric complexes with other members of the p24 family such as TMED2, TMED7 and TMED9. Interacts (via GOLD domain) with TMED2 (via GOLD domain); the complex is required for export of TMED10 from the ER to the cis-Golgi network; the complex is proposed to be involved in cis-Golgi network dynamics and / or biogenesis. Associates with the COPI vesicle coat subunits (coatomer). Tetramerization of the cytoplasmic domain at the Golgi membrane in vitro; the complex is proposed to interact with COPI coatomer and induce budding of the vesicles. Interacts with COPG1; the interaction involves TMED10 homodimer. Interacts with ARF1 (GDP-bound); the interaction probably involves a TMED10 oligomer. Interacts with SEC23A, SEC24B, SEC24C and SEC24D components of the coat protein complex II/COPII, indicative of an association of TMED10 with the COPII vesicle coat. Interacts with CD59. Interacts with MPPE1/PGAP5; the complex might recruit and sort GPI-anchored proteins to the ER-exit site, or the interaction might lead to recycling of PGAP5 between the ER and the Golgi. Interacts with F2LR1/PAR2. Interacts with KDELR2/ERD2; the interaction is disrupted by KDELR2 ligand. Found in a complex composed at least of SURF4, TMED2 and TMED10. Associates with the presenilin-dependent gamma-secretase complex. Interacts with STX17; the interaction is direct. Interacts with IL-1; the interaction is direct. Interacts with RAB21 (active GTP-bound form); the interaction is indirect and regulates TMED10 abundance and localization at the Golgi. Ubiquitous.

The protein localises to the endoplasmic reticulum membrane. The protein resides in the endoplasmic reticulum-Golgi intermediate compartment membrane. It is found in the golgi apparatus membrane. Its subcellular location is the golgi apparatus. It localises to the cis-Golgi network membrane. The protein localises to the trans-Golgi network membrane. The protein resides in the cytoplasmic vesicle. It is found in the secretory vesicle membrane. Its subcellular location is the cell membrane. It localises to the melanosome. Functionally, cargo receptor involved in protein vesicular trafficking and quality control in the endoplasmic reticulum (ER) and Golgi. The p24 protein family is a group of transmembrane proteins that bind coat protein complex I/COPI and coat protein complex II/COPII involved in vesicular trafficking between the membranes. Acts at the lumenal side for incorporation of secretory cargo molecules into transport vesicles and involved in vesicle coat formation at the cytoplasmic side. Mainly functions in the early secretory pathway and cycles between the ER, ER-Golgi intermediate compartment (ERGIC) and Golgi, mediating cargo transport through COPI and COPII-coated vesicles. In COPII vesicle-mediated anterograde transport, involved in the transport of GPI-anchored proteins by acting together with TMED2 as their cargo receptor; the function specifically implies SEC24C and SEC24D of the COPII vesicle coat and lipid raft-like microdomains of the ER. Recognizes GPI anchors structural remodeled in the ER by the GPI inositol-deacylase/PGAP1 and the metallophosphoesterase MPPE1/PGAP5. In COPI vesicle-mediated retrograde transport, involved in the biogenesis of COPI vesicles and vesicle coat recruitment. Involved in trafficking of amyloid beta A4 protein and soluble APP-beta release (independent from the modulation of gamma-secretase activity). Involved in the KDELR2-mediated retrograde transport of the toxin A subunit (CTX-A-K63)together with COPI and the COOH terminus of KDELR2. On Golgi membranes, acts as a primary receptor for ARF1-GDP, a GTP-binding protein involved in COPI-vesicle formation. Increases coatomer-dependent GTPase-activating activity of ARFGAP2 which mediates the hydrolysis of ARF1-bound GTP and therefore modulates protein trafficking from the Golgi apparatus. Involved in the exocytic trafficking of G protein-coupled receptors F2LR1/PAR2 (trypsin and tryspin-like enzyme receptor), OPRM1 (opioid receptor) and P2RY4 (UTD and UDP receptor) from the Golgi to the plasma membrane, thus contributing to receptor resensitization. In addition to its cargo receptor activity, may also act as a protein channel after oligomerization, facilitating the post-translational entry of leaderless cytoplasmic cargo into the ERGIC. Involved in the translocation into ERGIC, the vesicle entry and the secretion of leaderless cargos (lacking the secretion signal sequence), including the mature form of interleukin 1/IL-1 family members, the alpha-crystallin B chain HSPB5, the carbohydrate-binding proteins galectin-1/LGALS1 and galectin-3/LGALS3, the microtubule-associated protein Tau/MAPT, and the annexin A1/ANXA1; the translocation process is dependent on cargo protein unfolding and enhanced by chaperones HSP90AB1 and HSP90B1/GRP9. Could also associates with the presenilin-dependent gamma-secretase complex in order to regulate gamma-cleavages of the amyloid beta A4 protein to yield amyloid-beta 40/Abeta40. This Rattus norvegicus (Rat) protein is Transmembrane emp24 domain-containing protein 10.